The sequence spans 350 residues: MKKLVATAPRVAALVEYEDRAILANEVKIRVRFGAPKHGTEVVDFRAASPFIDEDFNGEWQMFTPRPADAPRGIEFGKFQLGNMVVGDIIECGSDVTDYAVGDSVCGYGPLSETVIINAVNNYKLRKMPQGSSWKNAVCYNPAQFAMSGVRDANVRVGDFVVVVGLGAIGQIAIQLAKRAGASVVIGVDPIAHRCDIARRHGADFCLNPIGTDVGKEIKTLTGKQGADVIIETSGYADALQSALRGLAYGGTISYVAFAKPFAEGFNLGREAHFNNAKIVFSRACSEPNPDYPRWSRKRIEETCWELLMNGYLNCEDLIDPVVTFANSPESYMQYVDQHPEQSIKMGVTF.

The protein belongs to the zinc-containing alcohol dehydrogenase family. Zn(2+) is required as a cofactor.

The catalysed reaction is a D-guloside + NAD(+) = a 3-dehydro-D-guloside + NADH + H(+). Its function is as follows. Catalyzes the NAD(+)-dependent oxidation of the hydroxyl group at C3 of D-gulosides leading to 3-dehydro-D-gulosides. Probably functions in a metabolic pathway that transforms D-gulosides to D-glucosides. Is also able to catalyze the reverse reactions, i.e. the NADH-dependent reduction of the oxo group at C3 of 3-dehydro-D-gulosides leading to D-gulosides. In vitro, can oxidize D-gulose and methyl beta-D-guloside, and reduce methyl alpha-3-dehydro-D-guloside and methyl beta-3-dehydro-D-guloside. However, the actual specific physiological substrates for this metabolic pathway are unknown. This Shigella flexneri protein is D-guloside 3-dehydrogenase (ycjQ).